A 322-amino-acid polypeptide reads, in one-letter code: DNA repair and recombination protein RadA (322 aa).

105 to 112 provides a ligand contact to ATP; sequence GMYGSGKT.

It belongs to the eukaryotic RecA-like protein family.

Functionally, involved in DNA repair and in homologous recombination. Binds and assemble on single-stranded DNA to form a nucleoprotein filament. Hydrolyzes ATP in a ssDNA-dependent manner and promotes DNA strand exchange between homologous DNA molecules. The protein is DNA repair and recombination protein RadA of Methanococcus maripaludis (strain C5 / ATCC BAA-1333).